The chain runs to 413 residues: Exodeoxyribonuclease I (413 aa).

Residues 12 to 193 (LFYDYETFGI…VSDVYATIEI (182 aa)) enclose the Exonuclease domain. 3 residues coordinate Mg(2+): Asp-15, Glu-17, and Asp-186. Glu-17 provides a ligand contact to substrate. Positions 202-349 (PRLFDFFFKI…QNIKIIFSKN (148 aa)) constitute an ExoI SH3-like domain. The ExoI C-terminal domain maps to 350 to 413 (NNTNQFFNVD…RYRARNFFIH (64 aa)).

In terms of assembly, monomer. Interacts with ssb (via C-terminus); this interaction stimulates the exonuclease activity by recruiting the enzyme to its substrate. Mg(2+) is required as a cofactor.

It carries out the reaction Exonucleolytic cleavage in the 3'- to 5'-direction to yield nucleoside 5'-phosphates.. Its function is as follows. Degrades single-stranded DNA (ssDNA) in a highly processive manner. Also functions as a DNA deoxyribophosphodiesterase that releases deoxyribose-phosphate moieties following the cleavage of DNA at an apurinic/apyrimidinic (AP) site by either an AP endonuclease or AP lyase. This Buchnera aphidicola subsp. Acyrthosiphon pisum (strain APS) (Acyrthosiphon pisum symbiotic bacterium) protein is Exodeoxyribonuclease I (sbcB).